Here is a 304-residue protein sequence, read N- to C-terminus: Non-specific ribonucleoside hydrolase RihC (304 aa).

Residue histidine 233 is part of the active site.

This sequence belongs to the IUNH family. RihC subfamily.

Hydrolyzes both purine and pyrimidine ribonucleosides with a broad-substrate specificity. This chain is Non-specific ribonucleoside hydrolase RihC, found in Escherichia coli O157:H7.